Here is a 521-residue protein sequence, read N- to C-terminus: MALMILPFIGALSVSESLVAVVTVCLVYLIIKSFQDKIPEGLSRLPGPKPLPIIGNVLEVGSRPYLSLTEMGKRYGNVFQIQIGMRPVVVLSGNETVRQALIKQGDEFAGRPDLYSFRFISEGKSLAFSTDQAGVWRARRKLAYSALRSFSTLEGTTPEYSCVLEEHISKEAKYLIQQLDTVMKADGSFDPFRYIVVSVANVICGMCFGRRYDHHDQELLSLVNLSDEFGQVVGSGNPADFIPILQYLPNKTMKKFVSINDRFISFVQKIVSEHYATFNKDNIRDITDSLIDHCEDRKLDENANVQMSDEKVVGIVNDLFGAGFDTISTALSWSVMYLVAYPEIQEXLYQELKENVGLDRTPVLSDRNNLPLLESFILEIFRHSSFLPFTIPHCTTKDTSLNGYYIPKDTCVFINQWQINHDPELWKEPSSFNPDRFLSADGTEVNKVDGEKVMIFGMGKRRCIGEVIARNEVYLFLAILIQKLHFCNLPGEPLDMTPEYGLTMKHKRCQLRATARVRSDH.

Phe-229 is a binding site for substrate. Residue Cys-463 coordinates heme.

Belongs to the cytochrome P450 family. Requires heme as cofactor.

The protein localises to the endoplasmic reticulum membrane. The protein resides in the microsome membrane. It catalyses the reaction an organic molecule + reduced [NADPH--hemoprotein reductase] + O2 = an alcohol + oxidized [NADPH--hemoprotein reductase] + H2O + H(+). Cytochromes P450 are a group of heme-thiolate monooxygenases. They oxidize a variety of structurally unrelated compounds, including steroids, fatty acids, and xenobiotics. This Chelon saliens (Leaping mullet) protein is Cytochrome P450 1A1 (cyp1a1).